Reading from the N-terminus, the 61-residue chain is Small ribosomal subunit protein uS14 (61 aa).

Positions 24, 27, 40, and 43 each coordinate Zn(2+).

It belongs to the universal ribosomal protein uS14 family. Zinc-binding uS14 subfamily. In terms of assembly, part of the 30S ribosomal subunit. Contacts proteins S3 and S10. It depends on Zn(2+) as a cofactor.

Binds 16S rRNA, required for the assembly of 30S particles and may also be responsible for determining the conformation of the 16S rRNA at the A site. This chain is Small ribosomal subunit protein uS14, found in Desulforamulus reducens (strain ATCC BAA-1160 / DSM 100696 / MI-1) (Desulfotomaculum reducens).